The following is a 292-amino-acid chain: 4-hydroxy-tetrahydrodipicolinate synthase (292 aa).

Thr45 contributes to the pyruvate binding site. Catalysis depends on Tyr133, which acts as the Proton donor/acceptor. Catalysis depends on Lys161, which acts as the Schiff-base intermediate with substrate. A pyruvate-binding site is contributed by Ile203.

The protein belongs to the DapA family. Homodimer.

Its subcellular location is the cytoplasm. The catalysed reaction is L-aspartate 4-semialdehyde + pyruvate = (2S,4S)-4-hydroxy-2,3,4,5-tetrahydrodipicolinate + H2O + H(+). The protein operates within amino-acid biosynthesis; L-lysine biosynthesis via DAP pathway; (S)-tetrahydrodipicolinate from L-aspartate: step 3/4. In terms of biological role, catalyzes the condensation of (S)-aspartate-beta-semialdehyde [(S)-ASA] and pyruvate to 4-hydroxy-tetrahydrodipicolinate (HTPA). This is 4-hydroxy-tetrahydrodipicolinate synthase from Pseudomonas syringae pv. syringae (strain B728a).